A 196-amino-acid polypeptide reads, in one-letter code: MKESIAKVYRKTGETEIKSEINLYGEGKYDIKTGIGFFDHMLNLMARHGLIDVKLEAKGDLQVDSHHTVEDVGIVLGESFKKALGDKKGIKRYGTSFVPMDEALASVSIDISGRPYIVCDFNFTVDKLGEMDTELVEEFLRALAFNAGITLHARVLYGKNNHHMIEAVFKALGRALREAVDRDEKINGVMSTKGTL.

The protein belongs to the imidazoleglycerol-phosphate dehydratase family.

It localises to the cytoplasm. It catalyses the reaction D-erythro-1-(imidazol-4-yl)glycerol 3-phosphate = 3-(imidazol-4-yl)-2-oxopropyl phosphate + H2O. The protein operates within amino-acid biosynthesis; L-histidine biosynthesis; L-histidine from 5-phospho-alpha-D-ribose 1-diphosphate: step 6/9. The sequence is that of Imidazoleglycerol-phosphate dehydratase from Clostridium botulinum (strain ATCC 19397 / Type A).